A 342-amino-acid chain; its full sequence is Porphobilinogen deaminase (342 aa).

S-(dipyrrolylmethanemethyl)cysteine is present on Cys249. Residues 323 to 342 form a disordered region; it reads AAAKQGAAEDGAADSAATGE.

Belongs to the HMBS family. As to quaternary structure, monomer. It depends on dipyrromethane as a cofactor.

It catalyses the reaction 4 porphobilinogen + H2O = hydroxymethylbilane + 4 NH4(+). It functions in the pathway porphyrin-containing compound metabolism; protoporphyrin-IX biosynthesis; coproporphyrinogen-III from 5-aminolevulinate: step 2/4. Functionally, tetrapolymerization of the monopyrrole PBG into the hydroxymethylbilane pre-uroporphyrinogen in several discrete steps. The chain is Porphobilinogen deaminase from Paraburkholderia phytofirmans (strain DSM 17436 / LMG 22146 / PsJN) (Burkholderia phytofirmans).